The sequence spans 61 residues: Metallothionein-2 (61 aa).

Position 1 is an N-acetylmethionine (M1). The segment at 1–29 (MDPNCSCVAGDSCTCAGSCKCKECKCTSC) is beta. A divalent metal cation-binding residues include C5, C7, C13, C15, C19, C21, C24, C26, C29, C33, C34, C36, C37, C41, C44, C48, C50, C57, C59, and C60. The segment at 20–25 (KCKECK) is antigenic epitope. The alpha stretch occupies residues 30 to 61 (KKSCCSCCPVGCAKCAQGCICKGASDKCNCCA).

It belongs to the metallothionein superfamily. Type 1 family.

In terms of biological role, metallothioneins have a high content of cysteine residues that bind various heavy metals; these proteins are transcriptionally regulated by both heavy metals and glucocorticoids. The chain is Metallothionein-2 (MT2) from Macaca fascicularis (Crab-eating macaque).